The chain runs to 284 residues: Bifunctional protein FolD 2 (284 aa).

NADP(+)-binding positions include 166–168 (GAS) and I232.

The protein belongs to the tetrahydrofolate dehydrogenase/cyclohydrolase family. In terms of assembly, homodimer.

The catalysed reaction is (6R)-5,10-methylene-5,6,7,8-tetrahydrofolate + NADP(+) = (6R)-5,10-methenyltetrahydrofolate + NADPH. It catalyses the reaction (6R)-5,10-methenyltetrahydrofolate + H2O = (6R)-10-formyltetrahydrofolate + H(+). The protein operates within one-carbon metabolism; tetrahydrofolate interconversion. In terms of biological role, catalyzes the oxidation of 5,10-methylenetetrahydrofolate to 5,10-methenyltetrahydrofolate and then the hydrolysis of 5,10-methenyltetrahydrofolate to 10-formyltetrahydrofolate. This Colwellia psychrerythraea (strain 34H / ATCC BAA-681) (Vibrio psychroerythus) protein is Bifunctional protein FolD 2.